The sequence spans 561 residues: Carboxylesterase 1E (561 aa).

A signal peptide spans Met1–Gly18. Residues Asn79 and Asn107 are each glycosylated (N-linked (GlcNAc...) asparagine). Cysteines 87 and 116 form a disulfide. Ser221 serves as the catalytic Acyl-ester intermediate. A disulfide bridge links Cys273 with Cys284. Catalysis depends on charge relay system residues Glu353 and His466. Asn489 carries an N-linked (GlcNAc...) asparagine glycan. The Prevents secretion from ER motif lies at His558–Leu561.

The protein belongs to the type-B carboxylesterase/lipase family. In terms of tissue distribution, expressed in liver.

The protein localises to the endoplasmic reticulum lumen. Its subcellular location is the microsome membrane. It carries out the reaction a carboxylic ester + H2O = an alcohol + a carboxylate + H(+). The catalysed reaction is all-trans-retinyl hexadecanoate + H2O = all-trans-retinol + hexadecanoate + H(+). In terms of biological role, involved in the detoxification of xenobiotics and in the activation of ester and amide prodrugs. Hydrolyzes retinyl esters. This is Carboxylesterase 1E (Ces1e) from Rattus norvegicus (Rat).